A 211-amino-acid polypeptide reads, in one-letter code: 2,3-bisphosphoglycerate-dependent phosphoglycerate mutase (211 aa).

Substrate-binding positions include 9–16, 22–23, Arg-61, 88–91, Lys-99, 115–116, and 159–160; these read RHGQSDWN, TG, ERDY, RR, and GN. Residue His-10 is the Tele-phosphohistidine intermediate of the active site. Glu-88 acts as the Proton donor/acceptor in catalysis.

The protein belongs to the phosphoglycerate mutase family. BPG-dependent PGAM subfamily. As to quaternary structure, homodimer.

The catalysed reaction is (2R)-2-phosphoglycerate = (2R)-3-phosphoglycerate. It participates in carbohydrate degradation; glycolysis; pyruvate from D-glyceraldehyde 3-phosphate: step 3/5. Catalyzes the interconversion of 2-phosphoglycerate and 3-phosphoglycerate. This is 2,3-bisphosphoglycerate-dependent phosphoglycerate mutase from Allorhizobium ampelinum (strain ATCC BAA-846 / DSM 112012 / S4) (Agrobacterium vitis (strain S4)).